The following is a 166-amino-acid chain: Interferon gamma (166 aa).

The N-terminal stretch at 1–23 (MKYTSSFLALLLSVLLGFSGSYG) is a signal peptide. A Pyrrolidone carboxylic acid modification is found at Gln-24. N-linked (GlcNAc...) asparagine glycans are attached at residues Asn-39 and Asn-106.

This sequence belongs to the type II (or gamma) interferon family. In terms of assembly, homodimer. Interacts with IFNGR1 (via extracellular domain); this interaction promotes IFNGR1 dimerization. As to expression, released primarily from activated T lymphocytes.

The protein resides in the secreted. Its function is as follows. Type II interferon produced by immune cells such as T-cells and NK cells that plays crucial roles in antimicrobial, antiviral, and antitumor responses by activating effector immune cells and enhancing antigen presentation. Primarily signals through the JAK-STAT pathway after interaction with its receptor IFNGR1 to affect gene regulation. Upon IFNG binding, IFNGR1 intracellular domain opens out to allow association of downstream signaling components JAK2, JAK1 and STAT1, leading to STAT1 activation, nuclear translocation and transcription of IFNG-regulated genes. Many of the induced genes are transcription factors such as IRF1 that are able to further drive regulation of a next wave of transcription. Plays a role in class I antigen presentation pathway by inducing a replacement of catalytic proteasome subunits with immunoproteasome subunits. In turn, increases the quantity, quality, and repertoire of peptides for class I MHC loading. Increases the efficiency of peptide generation also by inducing the expression of activator PA28 that associates with the proteasome and alters its proteolytic cleavage preference. Up-regulates as well MHC II complexes on the cell surface by promoting expression of several key molecules such as cathepsins B/CTSB, H/CTSH, and L/CTSL. Participates in the regulation of hematopoietic stem cells during development and under homeostatic conditions by affecting their development, quiescence, and differentiation. This chain is Interferon gamma (IFNG), found in Capra hircus (Goat).